The following is a 967-amino-acid chain: Isoleucine--tRNA ligase (967 aa).

The 'HIGH' region signature appears at 68–78 (PYANGTLHMGH). An L-isoleucyl-5'-AMP-binding site is contributed by glutamate 583. The 'KMSKS' region motif lies at 624 to 628 (KMSKS). An ATP-binding site is contributed by lysine 627. Positions 937, 940, 957, and 960 each coordinate Zn(2+).

It belongs to the class-I aminoacyl-tRNA synthetase family. IleS type 1 subfamily. In terms of assembly, monomer. The cofactor is Zn(2+).

The protein resides in the cytoplasm. The enzyme catalyses tRNA(Ile) + L-isoleucine + ATP = L-isoleucyl-tRNA(Ile) + AMP + diphosphate. Functionally, catalyzes the attachment of isoleucine to tRNA(Ile). As IleRS can inadvertently accommodate and process structurally similar amino acids such as valine, to avoid such errors it has two additional distinct tRNA(Ile)-dependent editing activities. One activity is designated as 'pretransfer' editing and involves the hydrolysis of activated Val-AMP. The other activity is designated 'posttransfer' editing and involves deacylation of mischarged Val-tRNA(Ile). The protein is Isoleucine--tRNA ligase of Prochlorococcus marinus (strain NATL2A).